Reading from the N-terminus, the 432-residue chain is Non-peptidase homolog YmxG (432 aa).

A signal peptide spans 1–20 (MKKFLITLLLGVFMGLQASA).

This sequence belongs to the peptidase M16 family.

Its subcellular location is the secreted. May contribute to the full activity of the protease PqqE. The polypeptide is Non-peptidase homolog YmxG (Helicobacter pylori (strain ATCC 700392 / 26695) (Campylobacter pylori)).